We begin with the raw amino-acid sequence, 101 residues long: Small ribosomal subunit protein uS14 (101 aa).

Belongs to the universal ribosomal protein uS14 family. In terms of assembly, part of the 30S ribosomal subunit. Contacts proteins S3 and S10.

Functionally, binds 16S rRNA, required for the assembly of 30S particles and may also be responsible for determining the conformation of the 16S rRNA at the A site. This is Small ribosomal subunit protein uS14 from Psychromonas ingrahamii (strain DSM 17664 / CCUG 51855 / 37).